A 220-amino-acid polypeptide reads, in one-letter code: Ribose-5-phosphate isomerase A (220 aa).

Substrate-binding positions include 28–31, 81–84, and 94–97; these read TGST, DGAD, and KGGG. Glu-103 (proton acceptor) is an active-site residue. Lys-121 provides a ligand contact to substrate.

This sequence belongs to the ribose 5-phosphate isomerase family. As to quaternary structure, homodimer.

It catalyses the reaction aldehydo-D-ribose 5-phosphate = D-ribulose 5-phosphate. Its pathway is carbohydrate degradation; pentose phosphate pathway; D-ribose 5-phosphate from D-ribulose 5-phosphate (non-oxidative stage): step 1/1. Catalyzes the reversible conversion of ribose-5-phosphate to ribulose 5-phosphate. The protein is Ribose-5-phosphate isomerase A of Hydrogenovibrio crunogenus (strain DSM 25203 / XCL-2) (Thiomicrospira crunogena).